A 218-amino-acid polypeptide reads, in one-letter code: Akirin (218 aa).

Residues 96–150 (KAIPRSNDFDDDGDQRGDGCSSNYSKAYRAPSSPKSGSDSEGEAPSTSVTDRSSA) are disordered. Residues 128-147 (SPKSGSDSEGEAPSTSVTDR) show a composition bias toward polar residues.

This sequence belongs to the akirin family. In terms of assembly, interacts with hda-1, a component of the NuRD complex. Interacts with let-418, a component of the NuRD and MEC complexes. Interacts with the transcription factor ceh-18. Interacts with ima-2. In terms of tissue distribution, localizes to somatic tissues throughout the body, including muscle cells. Expressed in lateral epithelial seam cells, the hyp7 epidermal syncytium, and multiple head and tail neurons.

Its subcellular location is the nucleus. Molecular adapter that acts as a bridge between a variety of multiprotein complexes, and which is involved in antifungal innate immunity, development of the muscle and sister chromatid cohesion. Plays a role in antifungal innate immunity by acting as a bridge between components of the NuRD (Nucleosome Remodeling and Deacetylase) and MEC chromatin remodeling complexes. NuRD and MEC complexes bind to the promoters of antimicrobial peptide genes and may recruit other proteins such as ceh-18 to control gene expression in response to fungal infection. During meiotic prophase I, plays a role in the disassembly of synaptonemal complex proteins and in the regulation of chromosome condensation and segregation. Together with nuclear import receptor ima-2, required for the import and load of cohesin complex proteins in meiotic nuclei, possibly by acting as a bridge between ima-2 and cohesins. Required for embryonic development of muscle tissue. The sequence is that of Akirin from Caenorhabditis elegans.